Here is a 370-residue protein sequence, read N- to C-terminus: 1-propanol dehydrogenase PduQ (370 aa).

This sequence belongs to the iron-containing alcohol dehydrogenase family. In terms of assembly, interacts with PduP, probably via the N-terminus of PduQ. The cofactor is Fe cation.

It is found in the bacterial microcompartment. The enzyme catalyses 1-propanol + NAD(+) = propanal + NADH + H(+). It participates in polyol metabolism; 1,2-propanediol degradation. An iron-dependent alcohol dehydrogenase required for optimal 1,2-propanediol (1,2-PD) degradation. NAD(+) and NADH are regenerated internally within the bacterial microcompartment (BMC) dedicated to 1,2-PD degradation by the PduP and PduQ enzymes, which reduce NAD(+) and oxidize NADH respectively, although there must also be cofactor transport across the BMC. Functionally, expression of a cosmid containing the full 21-gene pdu operon in E.coli allows E.coli to grow on 1,2-propanediol (1,2-PD) with the appearance of bacterial microcompartments (BMC) in its cytoplasm. Its function is as follows. The 1,2-PD-specific bacterial microcompartment (BMC) concentrates low levels of 1,2-PD catabolic enzymes, concentrates volatile reaction intermediates thus enhancing pathway flux and keeps the level of toxic, mutagenic propionaldehyde low. This chain is 1-propanol dehydrogenase PduQ, found in Citrobacter freundii.